A 435-amino-acid chain; its full sequence is MSYQGRARKFLESASIDVGDMVLVEKPDVTYEGMVLDRADDADDRHIVLKLENGYNIGVEISDARIELLEKGSEPRIELPPVEAAEDPELPDVSIISTGGTVASIIDYRTGAVHPAFTADDLLRANPELLDIANIRGRAVFNILSENMKPEYWVETARAVYGEIKDGADGVVVAHGTDTMHYTSAALSFMLRTPVPVVFTGAQRSSDRPSSDASLNIQCSVRAATSEIAEVTVCMHATMDDLSCHLHRGVKVRKMHTSRRDTFRSMNALPLAEVTPDGIKILEENYRKRGSDELELSDRVEERVAFIKSYPGISPDIIKWHLDEGYRGIVIEGTGLGHCPDTLIPVIGEAHDMGVPVAMTSQCLNGRVNMNVYSTGRRLLQAGVIPCDDMLPEVAYVKMCWVLGQTDDPEMAREMMRENIAGEINERTSIAYFRG.

Positions 91 to 419 (PDVSIISTGG…EMAREMMREN (329 aa)) constitute an Asparaginase/glutaminase domain. Catalysis depends on residues Thr101, Thr177, Asp178, and Lys254.

The protein belongs to the asparaginase 1 family. GatD subfamily. As to quaternary structure, heterodimer of GatD and GatE.

The catalysed reaction is L-glutamyl-tRNA(Gln) + L-glutamine + ATP + H2O = L-glutaminyl-tRNA(Gln) + L-glutamate + ADP + phosphate + H(+). Its function is as follows. Allows the formation of correctly charged Gln-tRNA(Gln) through the transamidation of misacylated Glu-tRNA(Gln) in organisms which lack glutaminyl-tRNA synthetase. The reaction takes place in the presence of glutamine and ATP through an activated gamma-phospho-Glu-tRNA(Gln). The GatDE system is specific for glutamate and does not act on aspartate. The polypeptide is Glutamyl-tRNA(Gln) amidotransferase subunit D (gatD) (Methanothermobacter thermautotrophicus (strain ATCC 29096 / DSM 1053 / JCM 10044 / NBRC 100330 / Delta H) (Methanobacterium thermoautotrophicum)).